Reading from the N-terminus, the 405-residue chain is Elongation factor Tu (405 aa).

In terms of domain architecture, tr-type G spans 10–213; it reads KEHVNVGTIG…AMDEYIPTPQ (204 aa). The interval 19–26 is G1; it reads GHVDHGKS. 19–26 contacts GTP; sequence GHVDHGKS. Residue Ser26 coordinates Mg(2+). A G2 region spans residues 64-68; that stretch reads GITIN. The G3 stretch occupies residues 85–88; the sequence is DCPG. GTP is bound by residues 85-89 and 140-143; these read DCPGH and NKCD. A G4 region spans residues 140 to 143; that stretch reads NKCD. The interval 178-180 is G5; that stretch reads SAL.

The protein belongs to the TRAFAC class translation factor GTPase superfamily. Classic translation factor GTPase family. EF-Tu/EF-1A subfamily. In terms of assembly, monomer.

The protein resides in the cytoplasm. It carries out the reaction GTP + H2O = GDP + phosphate + H(+). In terms of biological role, GTP hydrolase that promotes the GTP-dependent binding of aminoacyl-tRNA to the A-site of ribosomes during protein biosynthesis. The chain is Elongation factor Tu from Aquifex aeolicus (strain VF5).